A 494-amino-acid chain; its full sequence is MKFAKTLERTLEEDEIPQEWVEAAIQYKALKKCINKVVNELEFLGLQKNTLKILLNDKVVEVNEQETNPSNPIIAEYILSKTSTDAHNIKPMLKITLDYSSEDYTKDHIVELGKELKQKIEALLNDSDTEYEEDKIIELKEDDGGDLQIVTSREGSLSPPASRMASPPTSPTLKVVDSLNTNIDEALLSPDDHHKKHEIFIMLNSDSKFFEMLNDELNSLDTLTQQEESKIIEEVKKIAKYVNELKLKQSELYKWRELFKVYLDSEVYFKYNETALPSQQKSSEQIKSNLDLFVTNLNKSGIMTRFKKKQSLETFNQFMEMNYHLLKILQFQTINNEALRKILKKFDKQTSLGIQKTFPKLISNDHIFMSGSSLAQSICYIIQESIIKVIPQLDDYSCPICMNIAYKPIRLSCGHLFCVRCLVKMKQDDKTSCPLCRKENAILYADSSNLDLESMELMKKYFPREVKEKLRERDKERYNELRKNANSGEKCIVM.

In terms of domain architecture, SPX spans 1 to 360 (MKFAKTLERT…SLGIQKTFPK (360 aa)). The segment at 398–437 (CPICMNIAYKPIRLSCGHLFCVRCLVKMKQDDKTSCPLCR) adopts an RING-type zinc-finger fold.

The protein localises to the nucleus. Functionally, transcription factor required for yeast cell adherence to silicone substrate. The chain is Transcriptional regulator of yeast form adherence 3 (TRY3) from Candida albicans (strain SC5314 / ATCC MYA-2876) (Yeast).